Consider the following 256-residue polypeptide: Cysteine-rich repeat secretory protein 29 (256 aa).

The N-terminal stretch at 1-26 is a signal peptide; the sequence is MSSVFGSVHILAMIAIQLLLIHSVSS. Gnk2-homologous domains are found at residues 33-136 and 142-253; these read YLHH…SVAS and YEND…LYPF.

It belongs to the cysteine-rich repeat secretory protein family.

The protein resides in the secreted. This is Cysteine-rich repeat secretory protein 29 (CRRSP29) from Arabidopsis thaliana (Mouse-ear cress).